The sequence spans 162 residues: Balbiani ring protein 2 (162 aa).

Positions 1–31 (CDDAMRKTESDKCTNIGGKFDPSTCKCTPET) are last constant region. A last Cys-1 repeat region spans residues 32-51 (VTEGPTTCLESSESDEVTTK). A unique region region spans residues 52 to 162 (KPCDCTCAPD…VKGLEDILNS (111 aa)).

In terms of tissue distribution, salivary gland.

It is found in the secreted. Functionally, used by the larvae to construct a supramolecular structure, the larval tube. The sequence is that of Balbiani ring protein 2 (BR2) from Chironomus pallidivittatus (Midge).